The following is a 668-amino-acid chain: Bifunctional polymyxin resistance protein ArnA (668 aa).

The segment at 1–307 (MSNKAVVFAY…ELGLVDGSLL (307 aa)) is formyltransferase ArnAFT. The active-site Proton donor; for formyltransferase activity is H106. Residues R116 and 138 to 142 (VKRAD) each bind (6R)-10-formyltetrahydrofolate. Residues 317-668 (RRTRVLILGV…IADRAKQEAR (352 aa)) form a dehydrogenase ArnADH region. NAD(+) is bound by residues D350 and 371–372 (DI). Residues A396, Y401, and 435-436 (TS) each bind UDP-alpha-D-glucuronate. E437 (proton acceptor; for decarboxylase activity) is an active-site residue. Residues R463, N494, 528 to 537 (RLFDGGEQKR), and Y615 each bind UDP-alpha-D-glucuronate. R621 acts as the Proton donor; for decarboxylase activity in catalysis.

In the N-terminal section; belongs to the Fmt family. UDP-L-Ara4N formyltransferase subfamily. The protein in the C-terminal section; belongs to the NAD(P)-dependent epimerase/dehydratase family. UDP-glucuronic acid decarboxylase subfamily. As to quaternary structure, homohexamer, formed by a dimer of trimers.

The enzyme catalyses UDP-alpha-D-glucuronate + NAD(+) = UDP-beta-L-threo-pentopyranos-4-ulose + CO2 + NADH. The catalysed reaction is UDP-4-amino-4-deoxy-beta-L-arabinose + (6R)-10-formyltetrahydrofolate = UDP-4-deoxy-4-formamido-beta-L-arabinose + (6S)-5,6,7,8-tetrahydrofolate + H(+). It functions in the pathway nucleotide-sugar biosynthesis; UDP-4-deoxy-4-formamido-beta-L-arabinose biosynthesis; UDP-4-deoxy-4-formamido-beta-L-arabinose from UDP-alpha-D-glucuronate: step 1/3. The protein operates within nucleotide-sugar biosynthesis; UDP-4-deoxy-4-formamido-beta-L-arabinose biosynthesis; UDP-4-deoxy-4-formamido-beta-L-arabinose from UDP-alpha-D-glucuronate: step 3/3. It participates in bacterial outer membrane biogenesis; lipopolysaccharide biosynthesis. Its function is as follows. Bifunctional enzyme that catalyzes the oxidative decarboxylation of UDP-glucuronic acid (UDP-GlcUA) to UDP-4-keto-arabinose (UDP-Ara4O) and the addition of a formyl group to UDP-4-amino-4-deoxy-L-arabinose (UDP-L-Ara4N) to form UDP-L-4-formamido-arabinose (UDP-L-Ara4FN). The modified arabinose is attached to lipid A and is required for resistance to polymyxin and cationic antimicrobial peptides. This Pseudomonas fluorescens (strain ATCC BAA-477 / NRRL B-23932 / Pf-5) protein is Bifunctional polymyxin resistance protein ArnA.